The following is a 273-amino-acid chain: Eukaryotic translation initiation factor 3 subunit G-2 (273 aa).

An RRM domain is found at 193-271 (SAVRISNLSE…LILCVEWSKP (79 aa)).

This sequence belongs to the eIF-3 subunit G family. Component of the eukaryotic translation initiation factor 3 (eIF-3) complex. The eIF-3 complex interacts with pix.

Its subcellular location is the cytoplasm. In terms of biological role, RNA-binding component of the eukaryotic translation initiation factor 3 (eIF-3) complex, which is involved in protein synthesis of a specialized repertoire of mRNAs and, together with other initiation factors, stimulates binding of mRNA and methionyl-tRNAi to the 40S ribosome. The eIF-3 complex specifically targets and initiates translation of a subset of mRNAs involved in cell proliferation. This subunit can bind 18S rRNA. This is Eukaryotic translation initiation factor 3 subunit G-2 from Drosophila melanogaster (Fruit fly).